The primary structure comprises 471 residues: Mitochondrial distribution and morphology protein 10 (471 aa).

Residues 429–455 (PSSFSSPSRAANSTPAGGGQSVGGGIS) are disordered. Over residues 444-455 (AGGGQSVGGGIS) the composition is skewed to gly residues.

The protein belongs to the MDM10 family. As to quaternary structure, component of the ER-mitochondria encounter structure (ERMES) or MDM complex, composed of mmm1, mdm10, mdm12 and mdm34. Associates with the mitochondrial outer membrane sorting assembly machinery SAM(core) complex.

The protein localises to the mitochondrion outer membrane. Functionally, component of the ERMES/MDM complex, which serves as a molecular tether to connect the endoplasmic reticulum and mitochondria. Components of this complex are involved in the control of mitochondrial shape and protein biogenesis and may function in phospholipid exchange. mdm10 is involved in the late assembly steps of the general translocase of the mitochondrial outer membrane (TOM complex). Functions in the tom40-specific route of the assembly of outer membrane beta-barrel proteins, including the association of tom40 with the receptor tom22 and small TOM proteins. Can associate with the SAM(core) complex as well as the mdm12-mmm1 complex, both involved in late steps of the major beta-barrel assembly pathway, that is responsible for biogenesis of all outer membrane beta-barrel proteins. May act as a switch that shuttles between both complexes and channels precursor proteins into the tom40-specific pathway. Plays a role in mitochondrial morphology and in the inheritance of mitochondria. This chain is Mitochondrial distribution and morphology protein 10 (mdmB), found in Aspergillus fumigatus (strain ATCC MYA-4609 / CBS 101355 / FGSC A1100 / Af293) (Neosartorya fumigata).